Consider the following 326-residue polypeptide: uncharacterized protein (326 aa).

Residue 28–35 participates in ATP binding; sequence GPINSGKT.

This sequence belongs to the archaeal ATPase family.

This is an uncharacterized protein from Pyrococcus abyssi (strain GE5 / Orsay).